The primary structure comprises 485 residues: E3 ubiquitin-protein ligase RNF14 (485 aa).

In terms of domain architecture, RWD spans 11–137; sequence DELLALASIY…QFLKEETLTY (127 aa). The D-box motif lies at 37–45; it reads RIYLDLPQN. Positions 217-458 are TRIAD supradomain; that stretch reads KLFLCSICFC…DSESPCFNRL (242 aa). 15 residues coordinate Zn(2+): Cys-221, Cys-224, Cys-239, His-241, Cys-244, Cys-247, Cys-266, Cys-271, Cys-310, Cys-315, Cys-330, Cys-333, Cys-338, Cys-341, and His-346. Residues 221–271 form an RING-type 1 zinc finger; it reads CSICFCEKLGSDCMYFLECKHVYCKACLKDYFEIQIKDGQVKCLNCPEPQC. The segment at 290–351 adopts an IBR-type zinc-finger fold; sequence ARYDRLLLQS…RLTYHGLSPC (62 aa). At Ser-349 the chain carries Phosphoserine. Residues Cys-351, Cys-405, and Cys-408 each contribute to the Zn(2+) site. The RING-type 2; atypical zinc finger occupies 405–434; sequence CPCCGTPIQKLDGCNKMTCTGCMQYFCWIC. Cys-418 is a catalytic residue. Positions 423, 426, 431, 434, 446, and 454 each coordinate Zn(2+).

Belongs to the RBR family. RNF14 subfamily. In terms of assembly, interacts with GCN1; interaction takes place in response to ribosome collisions and is required for ubiquitination of EEF1A1/eEF1A. Interacts with the ubiquitin-conjugating enzymes UBE2E1 and UBE2E2. Interacts with AR/androgen receptor. Interacts with TCF7/TCF1, TCF7L1/TCF3 and TCF7L2/TCF4; promoting Wnt signaling. RING-type zinc finger-dependent and UBE2E2-dependent autoubiquitination.

It is found in the cytoplasm. The protein resides in the nucleus. It catalyses the reaction [E2 ubiquitin-conjugating enzyme]-S-ubiquitinyl-L-cysteine + [acceptor protein]-L-lysine = [E2 ubiquitin-conjugating enzyme]-L-cysteine + [acceptor protein]-N(6)-ubiquitinyl-L-lysine.. Its pathway is protein modification; protein ubiquitination. E3 ubiquitin-protein ligase that plays a key role in the RNF14-RNF25 translation quality control pathway, a pathway that takes place when a ribosome has stalled during translation, and which promotes ubiquitination and degradation of translation factors on stalled ribosomes. Recruited to stalled ribosomes by the ribosome collision sensor GCN1 and mediates 'Lys-6'-linked ubiquitination of target proteins, leading to their degradation. Mediates ubiquitination of EEF1A1/eEF1A and ETF1/eRF1 translation factors on stalled ribosomes, leading to their degradation. Also catalyzes ubiquitination of ribosomal proteins RPL0, RPL1, RPL12, RPS13 and RPS17. Specifically required to resolve RNA-protein cross-links caused by reactive aldehydes, which trigger translation stress by stalling ribosomes: acts by catalying 'Lys-6'-linked ubiquitination of RNA-protein cross-links, leading to their removal by the ATP-dependent unfoldase VCP and subsequent degradation by the proteasome. Independently of its function in the response to stalled ribosomes, acts as a regulator of transcription in Wnt signaling via its interaction with TCF transcription factors (TCF7/TCF1, TCF7L1/TCF3 and TCF7L2/TCF4). May also play a role as a coactivator for androgen- and, to a lesser extent, progesterone-dependent transcription. The protein is E3 ubiquitin-protein ligase RNF14 of Mus musculus (Mouse).